The following is a 494-amino-acid chain: Probable cytosol aminopeptidase (494 aa).

Positions 260 and 265 each coordinate Mn(2+). Residue Lys272 is part of the active site. Mn(2+) is bound by residues Asp283, Asp342, and Glu344. Arg346 is an active-site residue.

The protein belongs to the peptidase M17 family. Requires Mn(2+) as cofactor.

The protein resides in the cytoplasm. It carries out the reaction Release of an N-terminal amino acid, Xaa-|-Yaa-, in which Xaa is preferably Leu, but may be other amino acids including Pro although not Arg or Lys, and Yaa may be Pro. Amino acid amides and methyl esters are also readily hydrolyzed, but rates on arylamides are exceedingly low.. It catalyses the reaction Release of an N-terminal amino acid, preferentially leucine, but not glutamic or aspartic acids.. Functionally, presumably involved in the processing and regular turnover of intracellular proteins. Catalyzes the removal of unsubstituted N-terminal amino acids from various peptides. The protein is Probable cytosol aminopeptidase of Bacillus cereus (strain AH187).